The primary structure comprises 405 residues: MSTSFMKSPRLFFTSESVTEGHPDKICDQVSDAVLDAFLSHDPRARVACETATTTGLIVVIGEVTYEQGYIPIEEIVRKTIKDIGYTDAAYGFDADTCGVMVAIHGQSPDIAQGVNRALEVRSDGQVTEEEVATIGAGDQGMMFGFACNETPELMPLPIALAHRIGRRLSRLRKDGVLPYLRPDGKSQVTIEYSYGRPVRVDTVLVSNQHAPDVTQEQIRHDIIHHVIHEVIPNDLLDEKTKYFVNPTGRFVIGGPMGDSGLTGRKIIVDTYGGMARHGGGAFSGKDPTKVDRSAAYACRWVAKNVVAAGLADRFEIQVSYAIGVARPLSISVECFGTNKVPEETIVRLIDEHFDLRPGAIIRDLRLRRPIYRPTAAYGHFGRDDIDAPWEQTDRAEALRRAAGL.

His22 contributes to the ATP binding site. Asp24 is a binding site for Mg(2+). K(+) is bound at residue Glu50. Glu63 and Gln107 together coordinate L-methionine. Positions 107-117 (QSPDIAQGVNR) are flexible loop. ATP-binding positions include 184–186 (DGK), 250–251 (RF), Asp259, 265–266 (RK), Ala282, and Lys286. Asp259 is a binding site for L-methionine. Lys290 is a binding site for L-methionine.

This sequence belongs to the AdoMet synthase family. Homotetramer; dimer of dimers. Mg(2+) serves as cofactor. Requires K(+) as cofactor.

It localises to the cytoplasm. The enzyme catalyses L-methionine + ATP + H2O = S-adenosyl-L-methionine + phosphate + diphosphate. It functions in the pathway amino-acid biosynthesis; S-adenosyl-L-methionine biosynthesis; S-adenosyl-L-methionine from L-methionine: step 1/1. Catalyzes the formation of S-adenosylmethionine (AdoMet) from methionine and ATP. The overall synthetic reaction is composed of two sequential steps, AdoMet formation and the subsequent tripolyphosphate hydrolysis which occurs prior to release of AdoMet from the enzyme. The polypeptide is S-adenosylmethionine synthase (Roseiflexus castenholzii (strain DSM 13941 / HLO8)).